The chain runs to 310 residues: ADP-L-glycero-D-manno-heptose-6-epimerase (310 aa).

Residues 10-11 (FI), 31-32 (DN), Lys38, Lys53, 75-79 (EGACS), and Asn92 each bind NADP(+). The active-site Proton acceptor is Tyr140. Residue Lys144 participates in NADP(+) binding. Asn169 is a binding site for substrate. The NADP(+) site is built by Val170 and Lys178. The Proton acceptor role is filled by Lys178. Substrate is bound by residues Ser180, His187, 201–204 (FEGS), and Arg209. Lys267 is subject to N6-acetyllysine. A substrate-binding site is contributed by Tyr272.

Belongs to the NAD(P)-dependent epimerase/dehydratase family. HldD subfamily. As to quaternary structure, homopentamer. The cofactor is NADP(+).

It catalyses the reaction ADP-D-glycero-beta-D-manno-heptose = ADP-L-glycero-beta-D-manno-heptose. It functions in the pathway nucleotide-sugar biosynthesis; ADP-L-glycero-beta-D-manno-heptose biosynthesis; ADP-L-glycero-beta-D-manno-heptose from D-glycero-beta-D-manno-heptose 7-phosphate: step 4/4. Catalyzes the interconversion between ADP-D-glycero-beta-D-manno-heptose and ADP-L-glycero-beta-D-manno-heptose via an epimerization at carbon 6 of the heptose. The polypeptide is ADP-L-glycero-D-manno-heptose-6-epimerase (Escherichia coli (strain ATCC 8739 / DSM 1576 / NBRC 3972 / NCIMB 8545 / WDCM 00012 / Crooks)).